The sequence spans 225 residues: Small ribosomal subunit protein uS3 (225 aa).

The region spanning 38 to 106 (IRRFLQKKFK…PIGMNIIEVK (69 aa)) is the KH type-2 domain.

Belongs to the universal ribosomal protein uS3 family. In terms of assembly, part of the 30S ribosomal subunit. Forms a tight complex with proteins S10 and S14.

In terms of biological role, binds the lower part of the 30S subunit head. Binds mRNA in the 70S ribosome, positioning it for translation. This Leptospira biflexa serovar Patoc (strain Patoc 1 / Ames) protein is Small ribosomal subunit protein uS3.